A 67-amino-acid polypeptide reads, in one-letter code: Amphipathic peptide Tx348 (67 aa).

The signal sequence occupies residues 1 to 23 (MKSQAFFLLFLVVLLLATTQSEA). Residue F33 is modified to Phenylalanine amide. The propeptide occupies 37-67 (SMRNMDTMKYLYDPSLSAADLKTLQKLMENY).

It belongs to the non-disulfide-bridged peptide (NDBP) superfamily. Short antimicrobial peptide (group 4) family. Expressed by the venom gland.

The protein localises to the secreted. Its subcellular location is the target cell membrane. Its function is as follows. Amphipathic peptide that has antibacterial activities. This is Amphipathic peptide Tx348 from Buthus israelis (Israeli scorpion).